Consider the following 307-residue polypeptide: tRNA pseudouridine synthase B (307 aa).

Asp-38 serves as the catalytic Nucleophile.

It belongs to the pseudouridine synthase TruB family. Type 1 subfamily.

It carries out the reaction uridine(55) in tRNA = pseudouridine(55) in tRNA. Responsible for synthesis of pseudouridine from uracil-55 in the psi GC loop of transfer RNAs. This Bacillus thuringiensis (strain Al Hakam) protein is tRNA pseudouridine synthase B.